Reading from the N-terminus, the 4262-residue chain is Polyketide synthase PksM (4262 aa).

Positions 1–114 (MITEQLHISL…ADMHRKEQTA (114 aa)) are N-terminal hotdog fold 1. A PKS/mFAS DH 1 domain is found at 1–271 (MITEQLHISL…GKSVRNMSAF (271 aa)). Histidine 18 serves as the catalytic Proton acceptor; for dehydratase activity 1. A C-terminal hotdog fold 1 region spans residues 129–271 (DRILNLDEIY…GKSVRNMSAF (143 aa)). Aspartate 190 acts as the Proton donor; for dehydratase activity 1 in catalysis. The Carrier 1 domain occupies 293 to 367 (PAFEMYLRQL…ELAAHLADHY (75 aa)). Serine 327 carries the post-translational modification O-(pantetheine 4'-phosphoryl)serine. In terms of domain architecture, Ketosynthase family 3 (KS3) 1 spans 393-831 (GEDIAIIGMA…GSNAHLILEE (439 aa)). Catalysis depends on for beta-ketoacyl synthase 1 activity residues cysteine 569, histidine 704, and histidine 744. The N-terminal hotdog fold 2 stretch occupies residues 1009–1135 (HPLVHRNTSD…GRAVISDEAE (127 aa)). Residues 1009-1301 (HPLVHRNTSD…MRALDGEQHS (293 aa)) enclose the PKS/mFAS DH 2 domain. The Proton acceptor; for dehydratase activity 2 role is filled by histidine 1038. The interval 1149 to 1301 (SLDTVTSEQC…MRALDGEQHS (153 aa)) is C-terminal hotdog fold 2. Aspartate 1211 (proton donor; for dehydratase activity 2) is an active-site residue. The region spanning 2188-2261 (EKSTEYMKKL…ALVEHFIKTK (74 aa)) is the Carrier 2 domain. Serine 2222 is modified (O-(pantetheine 4'-phosphoryl)serine). Polar residues predominate over residues 2275-2291 (VQQHTPAESRTQSSQKP). Positions 2275–2313 (VQQHTPAESRTQSSQKPDQAAKRTRRFRKLGFSGEKETP) are disordered. Positions 2319–2734 (SRDVAVIGIS…GSNAHIILEE (416 aa)) constitute a Ketosynthase family 3 (KS3) 2 domain. Catalysis depends on for beta-ketoacyl synthase 2 activity residues cysteine 2476, histidine 2611, and histidine 2651. Positions 2750 to 2826 (ALIVLSAKNM…DFIENKADSL (77 aa)) form a coiled coil. Residues 3409–3486 (SIEKRLEHDL…ELISFFLTDH (78 aa)) form the Carrier 3 domain. An O-(pantetheine 4'-phosphoryl)serine modification is found at serine 3446. The 416-residue stretch at 3529–3944 (DEPIAIIGMS…GTNAHAVIEE (416 aa)) folds into the Ketosynthase family 3 (KS3) 3 domain. Catalysis depends on for beta-ketoacyl synthase 3 activity residues cysteine 3690, histidine 3825, and histidine 3865. A coiled-coil region spans residues 4004-4033 (KAMEARLAIVANNQEQLVRKLKEYVEAMKN). Residues 4135-4212 (NGKTHIQKII…ALSDHLALKA (78 aa)) enclose the Carrier 4 domain. Serine 4172 bears the O-(pantetheine 4'-phosphoryl)serine mark.

Requires pantetheine 4'-phosphate as cofactor.

Its subcellular location is the cytoplasm. It participates in antibiotic biosynthesis; bacillaene biosynthesis. Its function is as follows. Involved in some intermediate steps for the synthesis of the antibiotic polyketide bacillaene which is involved in secondary metabolism. This chain is Polyketide synthase PksM (pksM), found in Bacillus subtilis (strain 168).